Here is a 27-residue protein sequence, read N- to C-terminus: Phospholipase A2 taicatoxin (27 aa).

This sequence belongs to the phospholipase A2 family. Group I subfamily. In terms of assembly, heterotrimer composed of an alpha-neurotoxin-like peptide of 8 kDa (AC P0CJ35), this neurotoxic phospholipase of 16 kDa and a serine protease inhibitor of 7 kDa (AC B7S4N9) at an approximate stoichiometry of 1:1:4; non-covalently linked. It depends on Ca(2+) as a cofactor. Contains 7 disulfide bonds. In terms of tissue distribution, expressed by the venom gland.

Its subcellular location is the secreted. It carries out the reaction a 1,2-diacyl-sn-glycero-3-phosphocholine + H2O = a 1-acyl-sn-glycero-3-phosphocholine + a fatty acid + H(+). Its function is as follows. Heterotrimer: blocks the voltage-dependent L-type calcium channels from the heart, and the small conductance calcium-activated potassium channels in the chromaffin cells and in the brain. Is very toxic to mice. In terms of biological role, monomer: Snake venom phospholipase A2 (PLA2) that has neurotoxic activities. Voltage-dependently affects ionic currents in chick (Gallus domesticus) dorsal root ganglion cells. PLA2 catalyzes the calcium-dependent hydrolysis of the 2-acyl groups in 3-sn-phosphoglycerides. The sequence is that of Phospholipase A2 taicatoxin from Oxyuranus scutellatus scutellatus (Australian taipan).